Consider the following 340-residue polypeptide: MREQLEALRDEALQLVNQASTQKELNDVRVKYLGKKGPITEVLRGMGKLSAEERPVVGEIANAVRSVIQTELEQRLVDVKQQEMDAKLALEAIDVTLPGRPKQVGQAHLLQQVTDEIEDIFVGLGYTIAEGPEVEQDLFNFEMLNLPKDHPARDMQDSFYITDEILMRTHTSPVQARTMLASKGEPIRILCPGKVYRRDEDDATHSHQFMQVEGLVVGEEISMADLKGTLEAFVKQMFGEAREIRLRPSFFPFTEPSVEVDVSCFKCGGKGCNICKQTGWIEILGAGMVHPHVLEMAEYDSTKMSGFAFGMGIERIAMLKYGVDDIRHFYTNDVRFSEQF.

Mg(2+) is bound at residue E255.

The protein belongs to the class-II aminoacyl-tRNA synthetase family. Phe-tRNA synthetase alpha subunit type 1 subfamily. In terms of assembly, tetramer of two alpha and two beta subunits. Mg(2+) is required as a cofactor.

It localises to the cytoplasm. The enzyme catalyses tRNA(Phe) + L-phenylalanine + ATP = L-phenylalanyl-tRNA(Phe) + AMP + diphosphate + H(+). The sequence is that of Phenylalanine--tRNA ligase alpha subunit from Exiguobacterium sibiricum (strain DSM 17290 / CCUG 55495 / CIP 109462 / JCM 13490 / 255-15).